The following is a 349-amino-acid chain: GDSL esterase/lipase At1g58725 (349 aa).

Positions 1–19 (MKIQILLFALVLIFVEANA) are cleaved as a signal peptide. A glycan (N-linked (GlcNAc...) asparagine) is linked at asparagine 25. The active-site Nucleophile is serine 37. The N-linked (GlcNAc...) asparagine glycan is linked to asparagine 316. Active-site residues include aspartate 324 and histidine 327.

The protein belongs to the 'GDSL' lipolytic enzyme family.

The protein resides in the secreted. In Arabidopsis thaliana (Mouse-ear cress), this protein is GDSL esterase/lipase At1g58725.